A 138-amino-acid chain; its full sequence is Holo-[acyl-carrier-protein] synthase (138 aa).

Mg(2+) contacts are provided by aspartate 8 and glutamate 54.

Belongs to the P-Pant transferase superfamily. AcpS family. The cofactor is Mg(2+).

The protein resides in the cytoplasm. It carries out the reaction apo-[ACP] + CoA = holo-[ACP] + adenosine 3',5'-bisphosphate + H(+). Transfers the 4'-phosphopantetheine moiety from coenzyme A to a Ser of acyl-carrier-protein. This Roseiflexus sp. (strain RS-1) protein is Holo-[acyl-carrier-protein] synthase.